Consider the following 220-residue polypeptide: UPF0319 protein Ent638_1476 (220 aa).

The first 20 residues, Met1 to Ala20, serve as a signal peptide directing secretion.

Belongs to the UPF0319 family.

This Enterobacter sp. (strain 638) protein is UPF0319 protein Ent638_1476.